The primary structure comprises 466 residues: CBL-interacting protein kinase 20 (466 aa).

Residues 12 to 276 (YELGRSLGHG…IDELVKHPWF (265 aa)) enclose the Protein kinase domain. ATP is bound by residues 18–26 (LGHGTFSKV) and Lys-41. The active-site Proton acceptor is Asp-139. Residues 162 to 191 (DFGLSALSASRRHDGLLHTTCGTPSYVAPE) form an activation loop region. One can recognise an NAF domain in the interval 297 to 329 (KPANAAMNMKPASLNAFDIISLSQGFDLSGMFC). The PPI stretch occupies residues 337 to 366 (TQDQLFVTGKPATAIVSRLEEIAETEHFTV). Positions 446 to 466 (ASEKNQLPAVSEVSPLSSPRN) are disordered.

This sequence belongs to the protein kinase superfamily. CAMK Ser/Thr protein kinase family. SNF1 subfamily. Mn(2+) is required as a cofactor.

It carries out the reaction L-seryl-[protein] + ATP = O-phospho-L-seryl-[protein] + ADP + H(+). The catalysed reaction is L-threonyl-[protein] + ATP = O-phospho-L-threonyl-[protein] + ADP + H(+). In terms of biological role, CIPK serine-threonine protein kinases interact with CBL proteins. Binding of a CBL protein to the regulatory NAF domain of CIPK protein lead to the activation of the kinase in a calcium-dependent manner. The sequence is that of CBL-interacting protein kinase 20 (CIPK20) from Oryza sativa subsp. japonica (Rice).